The primary structure comprises 574 residues: MDYTREILTFQFGTYANYVGTHFWNQQEANFRYGDESEQVAEEQLPNNDILYREGRNDLNRTTYTPRLLSVDLSGTLGHLPVTGELYGNFVQRDEELLPLSTGEELEQVRKRAEESGVCSPEQLEVQEQSKASISEYQRDLLKNAVVPEKNYQLAATANSWVDFLYARYHPRTLNVLPGLIRDPTAQALGTYSAGTEMWQEVSFNEEFCDRIRLYVEECDGLQGFHVLFDIDDGFGGLAGKCLEHLNDEYSRASFALPLHYPRITSYPQADTRLSHSIRVVNNVLGYHQLSEQALMFTPLSTLETIWRNNNLKSRSLPGLQWETDNLYQTSALLAAFFDTATLSYRLRQTPESLLRFCECVTPAGRKMTAAGLALPFGLREGQDLIEFLDQSGDHALLTQLTPGCEPGTSYVVQSVTARGIPAERLKRPRELAGDQLRMAAYSCDSISHMLQLYYQCTYHGSVTNAAATPLPLKTQLPFPYEMFAAGISRDGYRLPEGAERETGSRVDSAPMLAAVQNSTKLGEHLDNVHAQSHRVQLAKLQAYSNSGLERDEYDTALDQLLEFRDLYADSQYL.

It belongs to the misato family.

Its subcellular location is the mitochondrion. The polypeptide is Protein misato (mst) (Drosophila melanogaster (Fruit fly)).